The primary structure comprises 260 residues: Flap endonuclease Xni (260 aa).

Residue Asp-104 coordinates Mg(2+). In terms of domain architecture, 5'-3' exonuclease spans 160–250; that stretch reads VSPQQLTDYW…NGNLQQLRLP (91 aa). K(+)-binding residues include Leu-171, Ala-172, Pro-180, Val-182, and Ile-185. The segment at 184 to 189 is interaction with DNA; sequence GIGPKS.

This sequence belongs to the Xni family. Requires Mg(2+) as cofactor. It depends on K(+) as a cofactor.

Functionally, has flap endonuclease activity. During DNA replication, flap endonucleases cleave the 5'-overhanging flap structure that is generated by displacement synthesis when DNA polymerase encounters the 5'-end of a downstream Okazaki fragment. This is Flap endonuclease Xni from Pectobacterium atrosepticum (strain SCRI 1043 / ATCC BAA-672) (Erwinia carotovora subsp. atroseptica).